A 257-amino-acid chain; its full sequence is 8-demethyl-8-aminoriboflavin-5'-phosphate synthase (257 aa).

FMN is bound by residues Thr-11–Arg-13, Ser-19–Thr-21, Ile-91–Asn-94, Cys-132–Asp-136, and Tyr-240.

Belongs to the SsuE family. In terms of assembly, homotetramer.

The enzyme catalyses FMN + L-glutamate + 3 A + O2 + H2O = 8-amino-8-demethylriboflavin 5'-phosphate + 2-oxoglutarate + 3 AH2 + CO2 + H(+). The protein operates within antibiotic biosynthesis. Involved in the biosynthesis of the riboflavin analog antibiotic roseoflavin (3,8-dimethylamino-riboflavin). Catalyzes the site-specific substitution of the C-8 methyl group of riboflavin-5'-phosphate (FMN) by an amino group to yield 8-amino-8-demethylriboflavin 5'-phosphate, via a combined oxidation, decarboxylation and transamination reaction. The catalysis is initiated by an oxidation step in which the C-8 methyl group on the dimethylbenzene ring of FMN is converted to a formyl group to yield the 8-demethyl-8-formylriboflavin-5'-phosphate (OHC-RP) intermediate. In the presence of thiamine, the formyl group is oxidized into a carboxyl group to yield the 8-demethyl-8-carboxyriboflavin-5'-phosphate (HO2C-RP) intermediate. Finally, in the presence of L-glutamate as an amino donor, decarboxylation and aminotransfer occur, resulting in production of 8-demethyl-8-aminoriboflavin-5'-phosphate. Addition of NAD (but not NADP) to the reaction increases the yield 1.7-fold. The reaction also proceeds without the addition of any electron acceptor, and it is possible that molecular oxygen serves this role. This chain is 8-demethyl-8-aminoriboflavin-5'-phosphate synthase, found in Streptomyces davaonensis (strain DSM 101723 / JCM 4913 / KCC S-0913 / 768).